The sequence spans 626 residues: Basic helix-loop-helix ARNT-like protein 1 (626 aa).

The interval 1–60 (MADQRMDISSTISDFMSPGPTDLLSSSLGTSGVDCNRKRKGSSTDYQESMDTDKDDPHGR) is disordered. Position 17 is a phosphoserine; by GSK3-beta (serine 17). Positions 17-32 (SPGPTDLLSSSLGTSG) are enriched in low complexity. A Phosphothreonine; by GSK3-beta modification is found at threonine 21. The short motif at 36-41 (NRKRKG) is the Nuclear localization signal element. The span at 51 to 60 (DTDKDDPHGR) shows a compositional bias: basic and acidic residues. A bHLH domain is found at 72–125 (NAREAHSQIEKRRRDKMNSFIDELASLVPTCNAMSRKLDKLTVLRMAVQHMKTL). Serine 78 is modified (phosphoserine). Residue serine 90 is modified to Phosphoserine; by CK2. Positions 142–152 (LSDDELKHLIL) match the Nuclear export signal 1 motif. The region spanning 143–215 (SDDELKHLIL…EQLSSSDTAP (73 aa)) is the PAS 1 domain. Residue lysine 252 forms a Glycyl lysine isopeptide (Lys-Gly) (interchain with G-Cter in SUMO2 and SUMO3) linkage. Lysine 259 participates in a covalent cross-link: Glycyl lysine isopeptide (Lys-Gly) (interchain with G-Cter in SUMO2). Positions 326 to 396 (PQPVNGEIRV…ECHRQVLQTR (71 aa)) constitute a PAS 2 domain. Positions 361-369 (LAYLPQELL) match the Nuclear export signal 2 motif. One can recognise a PAC domain in the interval 401 to 444 (TNCYKFKIKDGSFITLRSRWFSFMNPWTKEVEYIVSTNTVVLAN). Disordered stretches follow at residues 458–493 (ASPH…AGAG) and 511–595 (GSSP…SPSN). The segment covering 484–493 (IPGGTRAGAG) has biased composition (gly residues). Residues 508–588 (RIRGSSPSSC…IGIDMIDNDQ (81 aa)) are interaction with CIART. Residues 511 to 521 (GSSPSSCGSSP) show a composition bias toward low complexity. Lysine 538 bears the N6-acetyllysine mark.

In terms of assembly, component of the circadian clock oscillator which includes the CRY1/2 proteins, CLOCK or NPAS2,BMAL1 or BMAL2, CSNK1D and/or CSNK1E, TIMELESS and the PER1/2/3 proteins. Forms a heterodimer with CLOCK. The CLOCK-BMAL1 heterodimer is required for E-box-dependent transactivation, for CLOCK nuclear translocation and degradation, and, for phosphorylation of both CLOCK and BMAL1. Part of a nuclear complex which also includes RACK1 and PRKCA; RACK1 and PRKCA are recruited to the complex in a circadian manner. Interacts with NPAS2. Interacts with EZH2. Interacts with SUMO3. Interacts with SIRT1. Interacts with AHR. Interacts with ID1, ID2 and ID3. Interacts with DDX4. Interacts with OGT. Interacts with EED and SUZ12. Interacts with MTA1. Interacts with CIART. Interacts with HSP90. Interacts with KAT2B and EP300. Interacts with BHLHE40/DEC1 and BHLHE41/DEC2. Interacts with RELB and the interaction is enhanced in the presence of CLOCK. Interacts with PER1, PER2, CRY1 and CRY2 and this interaction requires a translocation to the nucleus. Interaction of the CLOCK-BMAL1 heterodimer with PER or CRY inhibits transcription activation. Interaction of the CLOCK-BMAL1 with CRY1 is independent of DNA but with PER2 is off DNA. The CLOCK-BMAL1 heterodimer interacts with GSK3B. Interacts with KDM5A. Interacts with KMT2A; in a circadian manner. Interacts with UBE3A. Interacts with PRKCG. Interacts with MAGEL2. Interacts with NCOA2. Interacts with THRAP3. The CLOCK-BMAL1 heterodimer interacts with PASD1. Interacts with PASD1. Interacts with USP9X. Interacts with PIWIL2 (via PIWI domain). Interacts with HDAC3. Interacts with HNF4A. Ubiquitinated, leading to its proteasomal degradation. Deubiquitinated by USP9X. In terms of processing, O-glycosylated; contains O-GlcNAc. O-glycosylation by OGT prevents protein degradation by inhibiting ubiquitination. It also stabilizes the CLOCK-BMAL1 heterodimer thereby increasing CLOCK-BMAL1-mediated transcription of genes in the negative loop of the circadian clock such as PER1/2/3 and CRY1/2. Post-translationally, acetylated on Lys-538 by CLOCK during the repression phase of the circadian cycle. Acetylation facilitates recruitment of CRY1 protein and initiates the repression phase of the circadian cycle. Acetylated at Lys-538 by KAT5 during the activation phase of the cycle, leading to recruitment of the positive transcription elongation factor b (P-TEFb) and BRD4, followed by productive elongation of circadian transcripts. Deacetylated by SIRT1, which may result in decreased protein stability. Phosphorylated upon dimerization with CLOCK. Phosphorylation enhances the transcriptional activity, alters the subcellular localization and decreases the stability of the CLOCK-BMAL1 heterodimer by promoting its degradation. Phosphorylation shows circadian variations in the liver with a peak between CT10 to CT14. Phosphorylation at Ser-90 by CK2 is essential for its nuclear localization, its interaction with CLOCK and controls CLOCK nuclear entry. Dephosphorylation at Ser-78 is important for dimerization with CLOCK and transcriptional activity. In terms of processing, sumoylated on Lys-259 upon dimerization with CLOCK. Predominantly conjugated to poly-SUMO2/3 rather than SUMO1 and the level of these conjugates undergo rhythmic variation, peaking at CT9-CT12. Sumoylation localizes it exclusively to the PML body and promotes its ubiquitination in the PML body, ubiquitin-dependent proteasomal degradation and the transcriptional activity of the CLOCK-BMAL1 heterodimer. Post-translationally, undergoes lysosome-mediated degradation in a time-dependent manner in the liver. As to expression, hair follicles (at protein level). Highly expressed in the adult brain, skeletal muscle and heart.

The protein resides in the nucleus. It localises to the cytoplasm. Its subcellular location is the PML body. Its activity is regulated as follows. There is conflicting data about the effect of NAD cofactors on activity. PubMed:11441146 suggests that the redox state of the cell can modulate the transcriptional activity of the CLOCK-BMAL1 heterodimer; NADH and NADPH enhance the DNA-binding activity of the heterodimer. PubMed:23229515 reports that NADH and NADPH have no significant effect on DNA-binding activity of the CLOCK-BMAL1 heterodimer. Its function is as follows. Transcriptional activator which forms a core component of the circadian clock. The circadian clock, an internal time-keeping system, regulates various physiological processes through the generation of approximately 24 hour circadian rhythms in gene expression, which are translated into rhythms in metabolism and behavior. It is derived from the Latin roots 'circa' (about) and 'diem' (day) and acts as an important regulator of a wide array of physiological functions including metabolism, sleep, body temperature, blood pressure, endocrine, immune, cardiovascular, and renal function. Consists of two major components: the central clock, residing in the suprachiasmatic nucleus (SCN) of the brain, and the peripheral clocks that are present in nearly every tissue and organ system. Both the central and peripheral clocks can be reset by environmental cues, also known as Zeitgebers (German for 'timegivers'). The predominant Zeitgeber for the central clock is light, which is sensed by retina and signals directly to the SCN. The central clock entrains the peripheral clocks through neuronal and hormonal signals, body temperature and feeding-related cues, aligning all clocks with the external light/dark cycle. Circadian rhythms allow an organism to achieve temporal homeostasis with its environment at the molecular level by regulating gene expression to create a peak of protein expression once every 24 hours to control when a particular physiological process is most active with respect to the solar day. Transcription and translation of core clock components (CLOCK, NPAS2, BMAL1, BMAL2, PER1, PER2, PER3, CRY1 and CRY2) plays a critical role in rhythm generation, whereas delays imposed by post-translational modifications (PTMs) are important for determining the period (tau) of the rhythms (tau refers to the period of a rhythm and is the length, in time, of one complete cycle). A diurnal rhythm is synchronized with the day/night cycle, while the ultradian and infradian rhythms have a period shorter and longer than 24 hours, respectively. Disruptions in the circadian rhythms contribute to the pathology of cardiovascular diseases, cancer, metabolic syndromes and aging. A transcription/translation feedback loop (TTFL) forms the core of the molecular circadian clock mechanism. Transcription factors, CLOCK or NPAS2 and BMAL1 or BMAL2, form the positive limb of the feedback loop, act in the form of a heterodimer and activate the transcription of core clock genes and clock-controlled genes (involved in key metabolic processes), harboring E-box elements (5'-CACGTG-3') within their promoters. The core clock genes: PER1/2/3 and CRY1/2 which are transcriptional repressors form the negative limb of the feedback loop and interact with the CLOCK|NPAS2-BMAL1|BMAL2 heterodimer inhibiting its activity and thereby negatively regulating their own expression. This heterodimer also activates nuclear receptors NR1D1/2 and RORA/B/G, which form a second feedback loop and which activate and repress BMAL1 transcription, respectively. BMAL1 positively regulates myogenesis and negatively regulates adipogenesis via the transcriptional control of the genes of the canonical Wnt signaling pathway. Plays a role in normal pancreatic beta-cell function; regulates glucose-stimulated insulin secretion via the regulation of antioxidant genes NFE2L2/NRF2 and its targets SESN2, PRDX3, CCLC and CCLM. Negatively regulates the mTORC1 signaling pathway; regulates the expression of MTOR and DEPTOR. Controls diurnal oscillations of Ly6C inflammatory monocytes; rhythmic recruitment of the PRC2 complex imparts diurnal variation to chemokine expression that is necessary to sustain Ly6C monocyte rhythms. Regulates the expression of HSD3B2, STAR, PTGS2, CYP11A1, CYP19A1 and LHCGR in the ovary and also the genes involved in hair growth. Plays an important role in adult hippocampal neurogenesis by regulating the timely entry of neural stem/progenitor cells (NSPCs) into the cell cycle and the number of cell divisions that take place prior to cell-cycle exit. Regulates the circadian expression of CIART and KLF11. The CLOCK-BMAL1 heterodimer regulates the circadian expression of SERPINE1/PAI1, VWF, B3, CCRN4L/NOC, NAMPT, DBP, MYOD1, PPARGC1A, PPARGC1B, SIRT1, GYS2, F7, NGFR, GNRHR, BHLHE40/DEC1, ATF4, MTA1, KLF10 and also genes implicated in glucose and lipid metabolism. Promotes rhythmic chromatin opening, regulating the DNA accessibility of other transcription factors. The NPAS2-BMAL1 heterodimer positively regulates the expression of MAOA, F7 and LDHA and modulates the circadian rhythm of daytime contrast sensitivity by regulating the rhythmic expression of adenylate cyclase type 1 (ADCY1) in the retina. The preferred binding motif for the CLOCK-BMAL1 heterodimer is 5'-CACGTGA-3', which contains a flanking adenine nucleotide at the 3-prime end of the canonical 6-nucleotide E-box sequence. CLOCK specifically binds to the half-site 5'-CAC-3', while BMAL1 binds to the half-site 5'-GTGA-3'. The CLOCK-BMAL1 heterodimer also recognizes the non-canonical E-box motifs 5'-AACGTGA-3' and 5'-CATGTGA-3'. Essential for the rhythmic interaction of CLOCK with ASS1 and plays a critical role in positively regulating CLOCK-mediated acetylation of ASS1. Plays a role in protecting against lethal sepsis by limiting the expression of immune checkpoint protein CD274 in macrophages in a PKM2-dependent manner. Regulates the diurnal rhythms of skeletal muscle metabolism via transcriptional activation of genes promoting triglyceride synthesis (DGAT2) and metabolic efficiency (COQ10B). Functionally, (Microbial infection) Regulates SARS coronavirus-2/SARS-CoV-2 entry and replication in lung epithelial cells probably through the post-transcriptional regulation of ACE2 and interferon-stimulated gene expression. This Homo sapiens (Human) protein is Basic helix-loop-helix ARNT-like protein 1.